Consider the following 268-residue polypeptide: MRGFLLLSLGVFSFSALAADLPGSHDLDILPRFPRAEIVDFRQAPSEERIYPLGAISRISGRLRMEGEVRAEGELTALTYRLPPEHSSQEAFAAARTALLKADATPLFWCERRDCGSSSLLANAVFGNAKLYGPDEQQAYLLVRLAAPQENSLVAVYSITRGNRRAYLQAEELKADAPLAELLPSPATLLRLLKANGELTLSHVPAEPAGSWLELLVRTLRLDTGVRVELSGKHAQEWRDALRGQGVLNSRMELGQSEVEGLHLNWLR.

An N-terminal signal peptide occupies residues 1 to 18 (MRGFLLLSLGVFSFSALA). Domain regions lie at residues 24–184 (SHDL…ELLP) and 185–268 (SPAT…NWLR). C110 and C115 are oxidised to a cystine.

As to quaternary structure, monomer.

It is found in the periplasm. This is an uncharacterized protein from Pseudomonas aeruginosa (strain ATCC 15692 / DSM 22644 / CIP 104116 / JCM 14847 / LMG 12228 / 1C / PRS 101 / PAO1).